A 797-amino-acid chain; its full sequence is GDH/6PGL endoplasmic bifunctional protein (797 aa).

The N-terminal stretch at 1–24 (MKCPGVWGMLTVTMCVVFLGCPQA) is a signal peptide. Residue Gln-25 is modified to Pyrrolidone carboxylic acid. A hexose-6-phosphate dehydrogenase region spans residues 25-531 (QELQGHVSVI…SGSHLSFSLG (507 aa)). NADP(+)-binding positions include 37–44 (GATGDLAK) and Tyr-154. Residue Asn-162 is glycosylated (N-linked (GlcNAc...) asparagine). Residue Lys-179 participates in NADP(+) binding. Residues Lys-179, 209-213 (HYLGK), Glu-248, and Asp-267 contribute to the D-glucose 6-phosphate site. The residue at position 213 (Lys-213) is an N6-succinyllysine. His-272 (proton acceptor) is an active-site residue. Residue Asn-287 is glycosylated (N-linked (GlcNAc...) asparagine). D-glucose 6-phosphate contacts are provided by Lys-365 and Arg-370. Arg-375 is an NADP(+) binding site. The segment at 532–545 (QPEQLVPGPGSTPR) is linker. A 6-phosphogluconolactonase region spans residues 546–797 (PSDFQVLGAK…WYMDYEAFLG (252 aa)). Residue Trp-623 participates in NADP(+) binding. N-linked (GlcNAc...) asparagine glycosylation is present at Asn-689.

This sequence in the N-terminal section; belongs to the glucose-6-phosphate dehydrogenase family. It in the C-terminal section; belongs to the glucosamine/galactosamine-6-phosphate isomerase family. 6-phosphogluconolactonase subfamily. Homodimer.

It localises to the endoplasmic reticulum lumen. The catalysed reaction is D-glucose 6-phosphate + NAD(+) = 6-phospho-D-glucono-1,5-lactone + NADH + H(+). The enzyme catalyses D-glucose 6-phosphate + NADP(+) = 6-phospho-D-glucono-1,5-lactone + NADPH + H(+). It carries out the reaction 6-phospho-D-glucono-1,5-lactone + H2O = 6-phospho-D-gluconate + H(+). It catalyses the reaction 2-deoxy-D-glucose 6-phosphate + NAD(+) = 2-deoxy-6-phospho-D-glucono-1,5-lactone + NADH + H(+). The catalysed reaction is 2-deoxy-D-glucose 6-phosphate + NADP(+) = 2-deoxy-6-phospho-D-glucono-1,5-lactone + NADPH + H(+). The enzyme catalyses D-galactose 6-phosphate + NADP(+) = 6-phospho-D-galactono-1,5-lactone + NADPH + H(+). It carries out the reaction D-galactose 6-phosphate + NAD(+) = 6-phospho-D-galactono-1,5-lactone + NADH + H(+). It catalyses the reaction D-glucosamine 6-phosphate + NADP(+) = 2-amino-2-deoxy-6-phospho-D-glucono-1,5-lactone + NADPH + 2 H(+). The catalysed reaction is D-glucose + NAD(+) = D-glucono-1,5-lactone + NADH + H(+). The enzyme catalyses D-glucose + NADP(+) = D-glucono-1,5-lactone + NADPH + H(+). It carries out the reaction D-glucose 6-sulfate + NADP(+) = 6-sulfo-D-glucono-1,5-lactone + NADPH + H(+). The protein operates within carbohydrate degradation; pentose phosphate pathway; D-ribulose 5-phosphate from D-glucose 6-phosphate (oxidative stage). It functions in the pathway carbohydrate degradation; pentose phosphate pathway; D-ribulose 5-phosphate from D-glucose 6-phosphate (oxidative stage): step 2/3. Functionally, bifunctional enzyme localized in the lumen of the endoplasmic reticulum that catalyzes the first two steps of the oxidative branch of the pentose phosphate pathway/shunt, an alternative to glycolysis and a major source of reducing power and metabolic intermediates for biosynthetic processes. Has a hexose-6-phosphate dehydrogenase activity, with broad substrate specificity compared to glucose-6-phosphate 1-dehydrogenase/G6PD, and catalyzes the first step of the pentose phosphate pathway. In addition, acts as a 6-phosphogluconolactonase and catalyzes the second step of the pentose phosphate pathway. May have a dehydrogenase activity for alternative substrates including glucosamine 6-phosphate and glucose 6-sulfate. The main function of this enzyme is to provide reducing equivalents such as NADPH to maintain the adequate levels of reductive cofactors in the oxidizing environment of the endoplasmic reticulum. By producing NADPH that is needed by reductases of the lumen of the endoplasmic reticulum like corticosteroid 11-beta-dehydrogenase isozyme 1/HSD11B1, indirectly regulates their activity. This chain is GDH/6PGL endoplasmic bifunctional protein, found in Oryctolagus cuniculus (Rabbit).